The following is a 99-amino-acid chain: Integration host factor subunit alpha (99 aa).

This sequence belongs to the bacterial histone-like protein family. As to quaternary structure, heterodimer of an alpha and a beta chain.

In terms of biological role, this protein is one of the two subunits of integration host factor, a specific DNA-binding protein that functions in genetic recombination as well as in transcriptional and translational control. This is Integration host factor subunit alpha (ihfA) from Xanthomonas axonopodis pv. citri (strain 306).